The chain runs to 263 residues: tRNA pseudouridine synthase A (263 aa).

Catalysis depends on Asp51, which acts as the Nucleophile. Tyr109 contacts substrate.

It belongs to the tRNA pseudouridine synthase TruA family. Homodimer.

The catalysed reaction is uridine(38/39/40) in tRNA = pseudouridine(38/39/40) in tRNA. In terms of biological role, formation of pseudouridine at positions 38, 39 and 40 in the anticodon stem and loop of transfer RNAs. This chain is tRNA pseudouridine synthase A, found in Mannheimia succiniciproducens (strain KCTC 0769BP / MBEL55E).